Here is a 395-residue protein sequence, read N- to C-terminus: NAD(P)H-quinone oxidoreductase subunit H, chloroplastic (395 aa).

The protein belongs to the complex I 49 kDa subunit family. In terms of assembly, NDH is composed of at least 16 different subunits, 5 of which are encoded in the nucleus.

It is found in the plastid. Its subcellular location is the chloroplast thylakoid membrane. It catalyses the reaction a plastoquinone + NADH + (n+1) H(+)(in) = a plastoquinol + NAD(+) + n H(+)(out). It carries out the reaction a plastoquinone + NADPH + (n+1) H(+)(in) = a plastoquinol + NADP(+) + n H(+)(out). Its function is as follows. NDH shuttles electrons from NAD(P)H:plastoquinone, via FMN and iron-sulfur (Fe-S) centers, to quinones in the photosynthetic chain and possibly in a chloroplast respiratory chain. The immediate electron acceptor for the enzyme in this species is believed to be plastoquinone. Couples the redox reaction to proton translocation, and thus conserves the redox energy in a proton gradient. This chain is NAD(P)H-quinone oxidoreductase subunit H, chloroplastic, found in Citrus sinensis (Sweet orange).